The primary structure comprises 248 residues: Murein peptide amidase A (248 aa).

Residues 3–245 (RYYSNNQEIT…DAFIALLQHD (243 aa)) form the Peptidase M14 domain. Zn(2+) is bound by residues histidine 60, glutamate 63, and histidine 168. Glutamate 221 (proton donor/acceptor) is an active-site residue.

It belongs to the peptidase M14 family. In terms of assembly, homodimer. The cofactor is Zn(2+).

It localises to the cytoplasm. The enzyme catalyses L-alanyl-gamma-D-glutamyl-meso-2,6-diaminopimelate + H2O = L-alanyl-D-glutamate + meso-2,6-diaminopimelate. The protein operates within cell wall degradation; peptidoglycan degradation. In terms of biological role, involved in muropeptide degradation. Catalyzes the hydrolysis of the gamma-D-glutamyl-diaminopimelic acid (gamma-D-Glu-Dap) amide bond in the murein tripeptide L-alanyl-gamma-D-glutamyl-meso-diaminopimelic acid, leading to the formation of L-Ala-gamma-D-Glu and Dap. Has weak activity with L-Ala-gamma-D-Glu-L-Lys, MurNAc-tripeptide and gamma-D-Glu-meso-Dap. Cannot hydrolyze murein tetrapeptide. The polypeptide is Murein peptide amidase A (Vibrio campbellii (strain ATCC BAA-1116)).